The chain runs to 464 residues: Adenylyltransferase and sulfurtransferase MOCS3 (464 aa).

ATP is bound by residues Gly101, Asp122, 129 to 133 (NNMHR), Lys146, and 190 to 191 (DN). Zn(2+) is bound by residues Cys231 and Cys234. Residue Cys248 is the Glycyl thioester intermediate; for adenylyltransferase activity of the active site. Residues Cys306 and Cys309 each contribute to the Zn(2+) site. Positions 358-462 (KKEQHVLLDV…WAANVNPNFP (105 aa)) constitute a Rhodanese domain. Cys422 (cysteine persulfide intermediate; for sulfurtransferase activity) is an active-site residue.

In the N-terminal section; belongs to the HesA/MoeB/ThiF family. UBA4 subfamily. Requires Zn(2+) as cofactor.

It localises to the cytoplasm. The catalysed reaction is [molybdopterin-synthase sulfur-carrier protein]-C-terminal Gly-Gly + ATP + H(+) = [molybdopterin-synthase sulfur-carrier protein]-C-terminal Gly-Gly-AMP + diphosphate. It carries out the reaction [molybdopterin-synthase sulfur-carrier protein]-C-terminal Gly-Gly-AMP + S-sulfanyl-L-cysteinyl-[cysteine desulfurase] + AH2 = [molybdopterin-synthase sulfur-carrier protein]-C-terminal-Gly-aminoethanethioate + L-cysteinyl-[cysteine desulfurase] + A + AMP + 2 H(+). The protein operates within tRNA modification; 5-methoxycarbonylmethyl-2-thiouridine-tRNA biosynthesis. It participates in cofactor biosynthesis; molybdopterin biosynthesis. Its function is as follows. Plays a central role in 2-thiolation of mcm(5)S(2)U at tRNA wobble positions of cytosolic tRNA(Lys), tRNA(Glu) and tRNA(Gln). Also essential during biosynthesis of the molybdenum cofactor. Acts by mediating the C-terminal thiocarboxylation of sulfur carriers URM1 and MOCS2A. Its N-terminus first activates URM1 and MOCS2A as acyl-adenylates (-COAMP), then the persulfide sulfur on the catalytic cysteine is transferred to URM1 and MOCS2A to form thiocarboxylation (-COSH) of their C-terminus. The reaction probably involves hydrogen sulfide that is generated from the persulfide intermediate and that acts as a nucleophile towards URM1 and MOCS2A. Subsequently, a transient disulfide bond is formed. Does not use thiosulfate as sulfur donor; NFS1 probably acting as a sulfur donor for thiocarboxylation reactions. The protein is Adenylyltransferase and sulfurtransferase MOCS3 of Arabidopsis thaliana (Mouse-ear cress).